Here is a 1078-residue protein sequence, read N- to C-terminus: Nonribosomal peptide synthetase aneB (1078 aa).

The segment at 20–417 is adenylation; sequence FQQNVLDRPD…HGRKDTQVKI (398 aa). The 77-residue stretch at 559–635 folds into the Carrier domain; that stretch reads MPTTPLERQM…TLCQHVSVRP (77 aa). At Ser596 the chain carries O-(pantetheine 4'-phosphoryl)serine. Positions 699–1013 are condensation; sequence NYTLRLDVKL…HEMGYYGPVT (315 aa).

The protein belongs to the NRP synthetase family.

It catalyses the reaction holo-[peptidyl-carrier protein] + L-proline + ATP = L-prolyl-[peptidyl-carrier protein] + AMP + diphosphate. Its pathway is secondary metabolite biosynthesis. In terms of biological role, nonribosomal peptide synthetase; part of the gene cluster that mediates the biosynthesis of aculenes, a unique type of norsesquiterpenes that contain a nordaucane skeleton linked to an L-proline moiety and are of mixed biosynthetic origin. The pathway begins with the synthesis of dauca-4,7-diene by the terpene cyclase aneC using farnesyl pyrophosphate (FPP) as substrate. The cytochrome P450 monooxygenase aneF then performs the initial oxidation at C-12 of dauca-4,7-diene to yield asperaculane D. Asperaculane D is substrate of the cytochrome P450 monooxygenase aneD for C-10 hydroxylation to yield asperaculane E. The cytochrome P450 monooxygenase aneG then converts asperaculane E into aculene D via C-2 oxidation. The monomodular nonribosomal peptide synthase aneB adenylates L-proline and the thiohydrolase aneE transfers this activated L-proline derivative to aculenes D and C to produce respectively aculenes B and A. The dioxygenase aneA converts aculene D into aculene C, and aculene B into aculene A by introducing the 5,6-alkene moiety. Asperculanes A, B, C and F, as well as 14-prolyl asperculane C, might be shunt products of the pathway. The sequence is that of Nonribosomal peptide synthetase aneB from Aspergillus aculeatus (strain ATCC 16872 / CBS 172.66 / WB 5094).